The following is a 292-amino-acid chain: UPF0696 protein C11orf68 homolog (292 aa).

Over residues M1–G10 the composition is skewed to low complexity. The segment at M1 to G60 is disordered. Residues A11–D20 are compositionally biased toward gly residues. The span at E35–P44 shows a compositional bias: basic and acidic residues.

The protein belongs to the UPF0696 family.

The protein is UPF0696 protein C11orf68 homolog (Bles03) of Rattus norvegicus (Rat).